The chain runs to 456 residues: NADPH-ferredoxin reductase FprA (456 aa).

FAD contacts are provided by Ser14, Glu40, Leu48, and Val84. Residues Arg110, 155 to 158, 199 to 200, and Glu211 contribute to the NADP(+) site; these read NGNV and RR. FAD contacts are provided by residues Trp359 and 366-368; that span reads GVI. Gly366 lines the NADP(+) pocket.

This sequence belongs to the ferredoxin--NADP reductase type 1 family. In terms of assembly, monomer. It depends on FAD as a cofactor.

The catalysed reaction is 2 reduced [2Fe-2S]-[ferredoxin] + NADP(+) + H(+) = 2 oxidized [2Fe-2S]-[ferredoxin] + NADPH. Its function is as follows. May serve as electron transfer protein and supply electrons to P450 systems. This Mycobacterium tuberculosis (strain CDC 1551 / Oshkosh) protein is NADPH-ferredoxin reductase FprA (fprA).